Reading from the N-terminus, the 349-residue chain is tRNA pseudouridine synthase D (349 aa).

Residue Phe27 coordinates substrate. The Nucleophile role is filled by Asp80. Asn129 is a substrate binding site. One can recognise a TRUD domain in the interval 155–303; sequence GVPNYFGAQR…VEAARRAMLL (149 aa). Phe329 contacts substrate.

It belongs to the pseudouridine synthase TruD family.

It carries out the reaction uridine(13) in tRNA = pseudouridine(13) in tRNA. Functionally, responsible for synthesis of pseudouridine from uracil-13 in transfer RNAs. In Enterobacter sp. (strain 638), this protein is tRNA pseudouridine synthase D.